Here is a 168-residue protein sequence, read N- to C-terminus: Cell division inhibitor SulA (168 aa).

The interval 105 to 111 is ftsZ binding; it reads ALLTGNY. The tract at residues 161 to 168 is lon protease binding; the sequence is KIHSTLYH.

This sequence belongs to the SulA family. In terms of assembly, interacts with FtsZ. Post-translationally, is rapidly cleaved and degraded by the Lon protease once DNA damage is repaired.

Component of the SOS system and an inhibitor of cell division. Accumulation of SulA causes rapid cessation of cell division and the appearance of long, non-septate filaments. In the presence of GTP, binds a polymerization-competent form of FtsZ in a 1:1 ratio, thus inhibiting FtsZ polymerization and therefore preventing it from participating in the assembly of the Z ring. This mechanism prevents the premature segregation of damaged DNA to daughter cells during cell division. The protein is Cell division inhibitor SulA of Pectobacterium carotovorum subsp. carotovorum (strain PC1).